Here is a 182-residue protein sequence, read N- to C-terminus: Isopentenyl-diphosphate Delta-isomerase (182 aa).

Histidine 25 and histidine 32 together coordinate Mn(2+). The Nudix hydrolase domain occupies 30–164 (PLHLAFSCWL…PWAFSPWMVM (135 aa)). The active site involves cysteine 67. Histidine 69 is a binding site for Mn(2+). Glutamate 87 contributes to the Mg(2+) binding site. 2 residues coordinate Mn(2+): glutamate 114 and glutamate 116. Residue glutamate 116 is part of the active site.

Belongs to the IPP isomerase type 1 family. Homodimer. It depends on Mg(2+) as a cofactor. Requires Mn(2+) as cofactor.

It localises to the cytoplasm. It catalyses the reaction isopentenyl diphosphate = dimethylallyl diphosphate. The protein operates within isoprenoid biosynthesis; dimethylallyl diphosphate biosynthesis; dimethylallyl diphosphate from isopentenyl diphosphate: step 1/1. Functionally, catalyzes the 1,3-allylic rearrangement of the homoallylic substrate isopentenyl (IPP) to its highly electrophilic allylic isomer, dimethylallyl diphosphate (DMAPP). This is Isopentenyl-diphosphate Delta-isomerase from Salmonella arizonae (strain ATCC BAA-731 / CDC346-86 / RSK2980).